A 504-amino-acid chain; its full sequence is Xylose import ATP-binding protein XylG (504 aa).

2 ABC transporter domains span residues 5–242 and 259–500; these read LEMK…VGRE and LRVE…VMEA. Residue 37–44 participates in ATP binding; it reads GENGSGKS.

Belongs to the ABC transporter superfamily. Xylose importer (TC 3.A.1.2.4) family. As to quaternary structure, the complex is composed of two ATP-binding proteins (XylG), two transmembrane proteins (XylH) and a solute-binding protein (XylF).

It localises to the cell inner membrane. The enzyme catalyses D-xylose(out) + ATP + H2O = D-xylose(in) + ADP + phosphate + H(+). Its function is as follows. Part of the ABC transporter complex XylFGH involved in xylose import. Responsible for energy coupling to the transport system. The protein is Xylose import ATP-binding protein XylG of Histophilus somni (strain 129Pt) (Haemophilus somnus).